Consider the following 106-residue polypeptide: MASMNVKKGDRVVVLAGKDKGKKGEVIAAMPSEQRVIVQGVNLVKRHTRPSATSQGGIVEKEASIHVSNVAHEDPKDGKATRIGHKILEDGRKVRVARRSGEVIDR.

The protein belongs to the universal ribosomal protein uL24 family. In terms of assembly, part of the 50S ribosomal subunit.

Its function is as follows. One of two assembly initiator proteins, it binds directly to the 5'-end of the 23S rRNA, where it nucleates assembly of the 50S subunit. One of the proteins that surrounds the polypeptide exit tunnel on the outside of the subunit. This is Large ribosomal subunit protein uL24 from Paramagnetospirillum magneticum (strain ATCC 700264 / AMB-1) (Magnetospirillum magneticum).